Here is a 747-residue protein sequence, read N- to C-terminus: Histone-lysine N-methyltransferase EZH1 (747 aa).

A disordered region spans residues aspartate 188 to phenylalanine 231. Over residues histidine 194–valine 211 the composition is skewed to basic and acidic residues. Lysine 327 is covalently cross-linked (Glycyl lysine isopeptide (Lys-Gly) (interchain with G-Cter in SUMO2)). Residues valine 368–lysine 414 are disordered. The span at serine 369–alanine 381 shows a compositional bias: low complexity. A compositionally biased stretch (basic and acidic residues) spans glutamate 382–glycine 393. The span at aspartate 395–lysine 414 shows a compositional bias: polar residues. The short motif at glutamine 491 to lysine 496 is the Nuclear localization signal element. Residues cysteine 504–serine 606 form the CXC domain. One can recognise an SET domain in the interval lysine 613–arginine 728.

The protein belongs to the class V-like SAM-binding methyltransferase superfamily. Histone-lysine methyltransferase family. EZ subfamily. In terms of assembly, component of the PRC2/EED-EZH1 complex, which includes EED, EZH1, SUZ12, RBBP4 and AEBP2. The PRC2/EED-EZH1 is less abundant than the PRC2/EED-EZH2 complex, has weak methyltransferase activity and compacts chromatin in the absence of the methyltransferase cofactor S-adenosyl-L-methionine (SAM). Interacts with EZHIP; the interaction blocks EZH1 methyltransferase activity. In terms of tissue distribution, expressed at high levels in kidney, adrenal gland, testis and brain.

Its subcellular location is the nucleus. It catalyses the reaction L-lysyl(27)-[histone H3] + 3 S-adenosyl-L-methionine = N(6),N(6),N(6)-trimethyl-L-lysyl(27)-[histone H3] + 3 S-adenosyl-L-homocysteine + 3 H(+). Its function is as follows. Polycomb group (PcG) protein. Catalytic subunit of the PRC2/EED-EZH1 complex, which methylates 'Lys-27' of histone H3, leading to transcriptional repression of the affected target gene. Able to mono-, di- and trimethylate 'Lys-27' of histone H3 to form H3K27me1, H3K27me2 and H3K27me3, respectively. Required for embryonic stem cell derivation and self-renewal, suggesting that it is involved in safeguarding embryonic stem cell identity. Compared to EZH2-containing complexes, it is less abundant in embryonic stem cells, has weak methyltransferase activity and plays a less critical role in forming H3K27me3, which is required for embryonic stem cell identity and proper differentiation. In Mus musculus (Mouse), this protein is Histone-lysine N-methyltransferase EZH1 (Ezh1).